We begin with the raw amino-acid sequence, 169 residues long: Peptide deformylase (169 aa).

The Fe cation site is built by C91 and H133. The active site involves E134. H137 provides a ligand contact to Fe cation.

Belongs to the polypeptide deformylase family. The cofactor is Fe(2+).

It catalyses the reaction N-terminal N-formyl-L-methionyl-[peptide] + H2O = N-terminal L-methionyl-[peptide] + formate. Functionally, removes the formyl group from the N-terminal Met of newly synthesized proteins. Requires at least a dipeptide for an efficient rate of reaction. N-terminal L-methionine is a prerequisite for activity but the enzyme has broad specificity at other positions. The protein is Peptide deformylase of Escherichia coli (strain K12 / DH10B).